The sequence spans 394 residues: Phosphoglycerate kinase (394 aa).

Substrate is bound by residues 21-23 (DFN), arginine 36, 59-62 (HLGR), arginine 118, and arginine 151. Residue serine 183 is modified to Phosphoserine. Residues lysine 201 and glycine 292 each contribute to the ATP site. Threonine 299 carries the phosphothreonine modification. ATP is bound by residues glutamate 323 and 350 to 353 (GGDS).

This sequence belongs to the phosphoglycerate kinase family. In terms of assembly, monomer.

It localises to the cytoplasm. The catalysed reaction is (2R)-3-phosphoglycerate + ATP = (2R)-3-phospho-glyceroyl phosphate + ADP. The protein operates within carbohydrate degradation; glycolysis; pyruvate from D-glyceraldehyde 3-phosphate: step 2/5. This chain is Phosphoglycerate kinase, found in Bacillus cereus (strain G9842).